The following is an 823-amino-acid chain: MEPHLKIDVSSASGSTTTGATASTSEAPQDSQAQQTMPPPSSDWSNQFNSPEAVSPKANGIKCFSPYSQEDMGPFVEQLLPFVRASAYNWFHLQAAKRRHFKEFDKKMCASEENAKLAELQNDRDELKVKWASRLLGKIKKDIQNDDKEAFISAINGSEPNKCIISVADQKGKMRRIDCLRQADKVWRLDLVTIILFKGIPLESTDGERLERSEACVHPLCINPFHMAISVRGLDVFMANYLKDVDTKITLTYPRNDELSDTVMVKQEPGEQTIVAPHAVLGTSSTHTRVWETNSERNAETIIITYDPQKACHTYFGGRATLAQQSLSAGNTYMVNKTAVDNNFFNAKRSVLCLPPPPIQNCFPYPIAGTSDSQQMDMSEDSNDGPSEKRSRDISSHDSPNSSTNDEVRRIVESGTEKLVLGSSIWAAPGQFSRTQQNQGAPGTSRQVRPLPDFQSQDSARSPGAFRSTAKPVCRMTVNTGNHGDVGVVVVDERNREHVIHAQHIVNALSSLRTTPSMRESPVGRKRMHPHTSNSFEFLNCNQEMNKNEGALGSDISPTHTAVSNLISRESSGYMASPTKFTTARGDTTSFSKIFQKIEEKHLQHNQPSTSYCNSQIQPPILSSKPVDSSVKLIAPVAVKPIMSGCNSIIPSPITTPRITPSFRMLEDDSLINVLGQLAHSNDGTTLNDSFIQHLIDTNSRSPLLSSGNAFSALSMGAVSGLVPGNSIHRPDSSASNGSNSLGVAMGLAVPQNIALAVQQTQNAMSPLHQIRVSVGAPPACSPSSSNSSLGAANQAPVSNTPQDPNAPKLPTDFSHALRNEKK.

A disordered region spans residues 1 to 56 (MEPHLKIDVSSASGSTTTGATASTSEAPQDSQAQQTMPPPSSDWSNQFNSPEAVSP). Over residues 10-25 (SSASGSTTTGATASTS) the composition is skewed to low complexity. The segment covering 26–52 (EAPQDSQAQQTMPPPSSDWSNQFNSPE) has biased composition (polar residues). A DNA-binding region (CTF/NF-I) is located at residues 61–253 (IKCFSPYSQE…DVDTKITLTY (193 aa)). Disordered regions lie at residues 364-408 (PYPI…NDEV), 433-468 (SRTQ…AFRS), and 777-823 (APPA…NEKK). Basic and acidic residues predominate over residues 386–396 (PSEKRSRDISS). Over residues 433–447 (SRTQQNQGAPGTSRQ) the composition is skewed to polar residues. Low complexity predominate over residues 777–794 (APPACSPSSSNSSLGAAN).

Belongs to the CTF/NF-I family. In terms of tissue distribution, expressed in muscles, neurons and intestinal cells.

The protein resides in the nucleus. In terms of biological role, probable transcription factor which recognizes and binds the palindromic sequence 5'-TTGGCANNNTGCCAA-3' present in promoters. Plays a role in locomotion, pharyngeal pumping, egg-laying, and life span. The sequence is that of Nuclear factor I family protein from Caenorhabditis elegans.